We begin with the raw amino-acid sequence, 144 residues long: MDSEEEEEVPQPMPSIPEDLESQKAMVAFFNSAVASAEEEQARLCGQLKECTASAWLICWPRPRRNLRQQPQPQELGVIPCVGRPTRPCRGPWRSCGRVHRTVPEPEGSAEGGGVHQQAGPGQGRGEGEAAGAGVACGRLQQVA.

Disordered stretches follow at residues 1–20 (MDSE…PEDL) and 95–132 (SCGR…EAAG). The segment covering 110–131 (AEGGGVHQQAGPGQGRGEGEAA) has biased composition (gly residues).

This sequence belongs to the GOLGA2 family.

This Homo sapiens (Human) protein is Putative golgin subfamily A member 2B (GOLGA2P5).